The primary structure comprises 154 residues: Prefoldin subunit alpha (154 aa).

Positions 119–154 (EKAEVETEMEELEQQAQQMQQQQMQQMMQQQEQEDE) are disordered. Positions 132–154 (QQAQQMQQQQMQQMMQQQEQEDE) are enriched in low complexity.

The protein belongs to the prefoldin subunit alpha family. In terms of assembly, heterohexamer of two alpha and four beta subunits.

The protein localises to the cytoplasm. Molecular chaperone capable of stabilizing a range of proteins. Seems to fulfill an ATP-independent, HSP70-like function in archaeal de novo protein folding. This chain is Prefoldin subunit alpha, found in Haloarcula marismortui (strain ATCC 43049 / DSM 3752 / JCM 8966 / VKM B-1809) (Halobacterium marismortui).